A 367-amino-acid polypeptide reads, in one-letter code: Cyclin-dependent kinase 5 activator 2 (367 aa).

Positions 1 to 11 are enriched in polar residues; the sequence is MGTVLSLSPAS. 4 disordered regions span residues 1–56, 72–98, 131–175, and 329–367; these read MGTV…RLKR, ASAK…LVQQ, AAAT…GSPR, and GEAA…NLDR. G2 carries N-myristoyl glycine lipidation. Basic residues predominate over residues 74–84; sequence AKKKKGSKKVT. Phosphothreonine is present on T84. Over residues 131–148 the composition is skewed to low complexity; the sequence is AAATCEPPSGGSAAAQPP. Residues 154 to 171 are compositionally biased toward pro residues; sequence KPPPPPPPAPQVAPPVPG. The span at 342 to 357 shows a compositional bias: low complexity; the sequence is GAPAASSAARDSCAAG.

This sequence belongs to the cyclin-dependent kinase 5 activator family. In terms of assembly, heterodimer of a catalytic subunit and a regulatory subunit. Myristoylated. The Gly-2-Ala mutant is absent of the cell periphery, suggesting that a proper myristoylation signal is essential for the proper distribution of CDK5R2 (p39). Brain and neuron specific.

It localises to the cell membrane. Functionally, activator of CDK5/TPKII. In Homo sapiens (Human), this protein is Cyclin-dependent kinase 5 activator 2 (CDK5R2).